The following is a 67-amino-acid chain: Conotoxin Pu5.1 (67 aa).

The first 22 residues, 1–22 (MRCVPVFVILLLLIASTPSVDA), serve as a signal peptide directing secretion. Residues 23–51 (RPNPKDDVPLASFHEDANGILQMLWKKGR) constitute a propeptide that is removed on maturation. W63 is subject to Tryptophan amide.

Belongs to the conotoxin T superfamily. In terms of processing, contains 2 disulfide bonds that can be either 'C1-C3, C2-C4' or 'C1-C4, C2-C3', since these disulfide connectivities have been observed for conotoxins with cysteine framework V (for examples, see AC P0DQQ7 and AC P81755). In terms of tissue distribution, expressed by the venom duct.

It localises to the secreted. The sequence is that of Conotoxin Pu5.1 from Conus pulicarius (Flea-bitten cone).